The chain runs to 314 residues: MEDKRNIQIIEWEHLDKKKFYVFGVAMTMMIRVSVYPFTLIRTRLQVQKGKSLYHGTFDAFIKILRADGITGLYRGFLVNTFTLISGQCYVTTYELTRKFVADYSQSNTVKSLVAGGSASLVAQSITVPIDVVSQHLMMQRKGEKMGRFQVRGNPEGQGVVAFGQTKDIIRQILRADGLRGFYRGYVASLLTYIPNSAVWWPFYHFYAEQLSYLCPKECPHIVFQAVSGPLAAATASILTNPMDVIRTRVQVEGKNSIILTFRQLMAEEGPWGLMKGLSARIISATPSTIVIVVGYESLKKLSLRPELVDSRHW.

Solcar repeat units lie at residues 18 to 100, 107 to 210, and 220 to 302; these read KKFY…TRKF, SNTV…YAEQ, and PHIV…LKKL. The next 6 membrane-spanning stretches (helical) occupy residues 20 to 42, 71 to 90, 113 to 133, 185 to 201, 222 to 239, and 278 to 296; these read FYVF…TLIR, TGLY…GQCY, LVAG…IDVV, GYVA…AVWW, IVFQ…ASIL, and LSAR…VVGY.

Belongs to the mitochondrial carrier (TC 2.A.29) family.

The protein localises to the mitochondrion membrane. It catalyses the reaction L-valine(in) = L-valine(out). The catalysed reaction is L-leucine(in) = L-leucine(out). In terms of biological role, mitochondrial solute transporter which transports branched-chain amino acid (BCAA; valine, leucine and isoleucine) into mitochondria in brown adipose tissue (BAT). BAT is involved in BCAA catabolism and actively utilizes BCAA in the mitochondria for thermogenesis. The polypeptide is Solute carrier family 25 member 44 (Pongo abelii (Sumatran orangutan)).